Consider the following 145-residue polypeptide: Copper transporter 4 (145 aa).

Transmembrane regions (helical) follow at residues 53 to 73 (GMYA…EWLA) and 106 to 126 (YLVI…AIFG).

The protein belongs to the copper transporter (Ctr) (TC 1.A.56) family. SLC31A subfamily. In terms of tissue distribution, highly expressed in roots and at lower levels in leaves, stems and flowers.

The protein resides in the membrane. In terms of biological role, involved in the transport of copper. This is Copper transporter 4 (COPT4) from Arabidopsis thaliana (Mouse-ear cress).